A 299-amino-acid chain; its full sequence is HTH-type transcriptional regulator ArgP (299 aa).

In terms of domain architecture, HTH lysR-type spans 2 to 58; it reads FDYKLLSALAAVIEQAGFERAAQVLGLSQSAISQRIKLLEARVGQPVLVRVTPPAPT. Positions 19–38 form a DNA-binding region, H-T-H motif; the sequence is FERAAQVLGLSQSAISQRIK.

The protein belongs to the LysR transcriptional regulatory family. As to quaternary structure, homodimer.

In terms of biological role, controls the transcription of genes involved in arginine and lysine metabolism. The sequence is that of HTH-type transcriptional regulator ArgP from Pseudomonas fluorescens (strain ATCC BAA-477 / NRRL B-23932 / Pf-5).